A 623-amino-acid polypeptide reads, in one-letter code: Prothrombin (623 aa).

The N-terminal stretch at 1 to 24 (MAHVRGLQLPGCLALAALCTLVHS) is a signal peptide. Positions 25-43 (QHVFLAPQQALSLLQRVRR) are excised as a propeptide. The Gla domain maps to 44-90 (ANSVFLEEVRKGNLERECVEETCSYEEAFEALESSTATDVFWAKYTA). 4-carboxyglutamate occurs at positions 50, 51, 58, 60, 63, 64, 69, 70, 73, and 76. C61 and C66 form a disulfide bridge. 11 disulfides stabilise this stretch: C91–C104, C109–C187, C130–C170, C158–C182, C214–C292, C235–C275, C263–C287, C337–C483, C392–C408, C537–C551, and C565–C595. Kringle domains lie at 108 to 187 (NCAE…IPVC) and 213 to 292 (QCVP…LNYC). N-linked (GlcNAc...) asparagine glycans are attached at residues N122 and N144. Positions 365 to 619 (IVEGSDAEIG…LKKWIQKVID (255 aa)) constitute a Peptidase S1 domain. The Charge relay system role is filled by H407. An N-linked (GlcNAc...) asparagine glycan is attached at N417. The active-site Charge relay system is D463. A high affinity receptor-binding region which also known as the TP508 peptide region spans residues 552-574 (AGYKPDEGKRGDACEGDSGGPFV). The active-site Charge relay system is S569.

It belongs to the peptidase S1 family. In terms of assembly, heterodimer (named alpha-thrombin) of a light and a heavy chain; disulfide-linked. Forms a heterodimer with SERPINA5. In plasma, interacts (via N-terminus) with alpha-1-microglobulin; this interaction does not prevent the activation of prothrombin to thrombin. In terms of processing, the gamma-carboxyglutamyl residues, which bind calcium ions, result from the carboxylation of glutamyl residues by a microsomal enzyme, the vitamin K-dependent carboxylase. The modified residues are necessary for the calcium-dependent interaction with a negatively charged phospholipid surface, which is essential for the conversion of prothrombin to thrombin. Post-translationally, in the penultimate step of the coagulation cascade, prothrombin is converted to thrombin by the prothrombinase complex composed of factor Xa (F10), cofactor Va (F5), and phospholipids. This activation requires factor Xa-catalyzed sequential cleavage at 2 sites, Arg-315 and Arg-364, along 2 possible pathways. In the first pathway, the first cleavage occurs at Arg-315, leading to the formation of the inactive intermediate prethrombin-2. This pathway preferentially occurs on platelets and in the absence of cofactor Va. In the second pathway, the first cleavage occurs at Arg-364, which separates protease domain into 2 chains that remain connected through a disulfide bond and generates the active intermediate meizothrombin. The presence of cofactor Va directs activation along the meizothrombin pathway and greatly accelerates the rate of cleavage at Arg-364, but has a smaller effect on the cleavage of meizothrombin at Arg-315. Meizothrombin accumulates as an intermediate when prothrombinase is assembled on the membrane of red blood cells.

The enzyme catalyses Selective cleavage of Arg-|-Gly bonds in fibrinogen to form fibrin and release fibrinopeptides A and B.. Its activity is regulated as follows. Activity is promoted in the presence of negatively charged surfaces, such as polyphosphate and dextran sulfate. Inhibited by SERPINA5. Thrombin, which cleaves bonds after Arg and Lys, converts fibrinogen to fibrin and activates factors V, VII, VIII, XIII, and, in complex with thrombomodulin, protein C. Functions in blood homeostasis, inflammation and wound healing. Activates coagulation factor XI (F11); activation is promoted by the contact with negatively charged surfaces. Triggers the production of pro-inflammatory cytokines, such as MCP-1/CCL2 and IL8/CXCL8, in endothelial cells. This chain is Prothrombin (F2), found in Pongo abelii (Sumatran orangutan).